Consider the following 98-residue polypeptide: NADH-ubiquinone oxidoreductase chain 4L (98 aa).

Transmembrane regions (helical) follow at residues 1–21, 29–49, and 61–81; these read MSIT…GLLM, SLLC…MAIL, and IILL…LVMV.

Belongs to the complex I subunit 4L family. As to quaternary structure, core subunit of respiratory chain NADH dehydrogenase (Complex I) which is composed of 45 different subunits.

The protein resides in the mitochondrion inner membrane. It catalyses the reaction a ubiquinone + NADH + 5 H(+)(in) = a ubiquinol + NAD(+) + 4 H(+)(out). In terms of biological role, core subunit of the mitochondrial membrane respiratory chain NADH dehydrogenase (Complex I) which catalyzes electron transfer from NADH through the respiratory chain, using ubiquinone as an electron acceptor. Part of the enzyme membrane arm which is embedded in the lipid bilayer and involved in proton translocation. This chain is NADH-ubiquinone oxidoreductase chain 4L (MT-ND4L), found in Mesophylla macconnelli (MacConnell's bat).